The primary structure comprises 226 residues: UPF0758 protein Daro_3142 (226 aa).

One can recognise an MPN domain in the interval 103–226 (SFTSPGKVRD…PLSFAERGLL (124 aa)). His-174, His-176, and Asp-187 together coordinate Zn(2+). Residues 174-187 (HNHPSGIAEPSRAD) carry the JAMM motif motif.

This sequence belongs to the UPF0758 family.

The protein is UPF0758 protein Daro_3142 of Dechloromonas aromatica (strain RCB).